We begin with the raw amino-acid sequence, 176 residues long: NAD(P)H-quinone oxidoreductase subunit 6, chloroplastic (176 aa).

5 consecutive transmembrane segments (helical) span residues 10 to 30 (FILV…VFFT), 32 to 52 (TIFS…FYIL), 63 to 83 (LLIY…FMNG), 92 to 112 (VWTV…ISQI), and 152 to 172 (FFLP…GAIF).

The protein belongs to the complex I subunit 6 family. As to quaternary structure, NDH is composed of at least 16 different subunits, 5 of which are encoded in the nucleus.

The protein resides in the plastid. Its subcellular location is the chloroplast thylakoid membrane. The enzyme catalyses a plastoquinone + NADH + (n+1) H(+)(in) = a plastoquinol + NAD(+) + n H(+)(out). The catalysed reaction is a plastoquinone + NADPH + (n+1) H(+)(in) = a plastoquinol + NADP(+) + n H(+)(out). Its function is as follows. NDH shuttles electrons from NAD(P)H:plastoquinone, via FMN and iron-sulfur (Fe-S) centers, to quinones in the photosynthetic chain and possibly in a chloroplast respiratory chain. The immediate electron acceptor for the enzyme in this species is believed to be plastoquinone. Couples the redox reaction to proton translocation, and thus conserves the redox energy in a proton gradient. This is NAD(P)H-quinone oxidoreductase subunit 6, chloroplastic (ndhG) from Phaseolus vulgaris (Kidney bean).